Reading from the N-terminus, the 128-residue chain is T-cell leukemia/lymphoma protein 1B (128 aa).

This sequence belongs to the TCL1 family. As to quaternary structure, interacts with AKT1 and AKT2 (via PH domain). Does not interact with AKT3. In terms of tissue distribution, expressed in a variety of tissues including placenta and testis.

Functionally, enhances the phosphorylation and activation of AKT1 and AKT2. This chain is T-cell leukemia/lymphoma protein 1B (TCL1B), found in Homo sapiens (Human).